We begin with the raw amino-acid sequence, 217 residues long: UPF0319 protein VP1009 (217 aa).

Residues 1-21 (MRLKTWIVAFFLGLFGTTVNA) form the signal peptide.

This sequence belongs to the UPF0319 family.

This chain is UPF0319 protein VP1009, found in Vibrio parahaemolyticus serotype O3:K6 (strain RIMD 2210633).